A 334-amino-acid chain; its full sequence is MSGFYHKHFLKLLDFTPAELNSLLQLAAKLKADKKSGKEEAKLTGKNIALIFEKDSTRTRCSFEVAAYDQGARVTYLGPSGSQIGHKESIKDTARVLGRMYDGIQYRGYGQEIVETLAEYASVPVWNGLTNEFHPTQLLADLLTMQEHLPGKAFNEMTLVYAGDARNNMGNSMLEAAALTGLDLRLVAPQACWPEAALVTECRALAQQNGGNITLTEDVAKGVEGADFIYTDVWVSMGEAKEKWAERIALLREYQVNSKMMQLTGNPEVKFLHCLPAFHDDQTTLGKKMAEEFGLHGGMEVTDEVFESAASIVFDQAENRMHTIKAVMVATLSK.

Residues 56 to 59, Gln-83, Arg-107, and 134 to 137 contribute to the carbamoyl phosphate site; these read STRT and HPTQ. L-ornithine is bound by residues Asn-168, Asp-232, and 236–237; that span reads SM. Zn(2+) is bound at residue Cys-274. Carbamoyl phosphate contacts are provided by residues 274-275 and Arg-320; that span reads CL.

Belongs to the aspartate/ornithine carbamoyltransferase superfamily. OTCase family. In E.coli strain K12, trimer of identical or non-identical chains are composed of ArgI (I) and/or ArgF (F). The trimer has the following composition: FFI, FFF, FII, III. E.coli strains B and W, which are known to contain only ArgI, produce only a trimer of identical chains (III).

The protein localises to the cytoplasm. It catalyses the reaction carbamoyl phosphate + L-ornithine = L-citrulline + phosphate + H(+). It participates in amino-acid biosynthesis; L-arginine biosynthesis; L-arginine from L-ornithine and carbamoyl phosphate: step 1/3. Reversely inhibited by N-(N-Sulfodiaminophosphinyl)-L-ornithine. Zinc is an allosteric regulator of the substrate-bound enzyme and a competitive inhibitor of the free enzyme. Reversibly catalyzes the transfer of the carbamoyl group from carbamoyl phosphate (CP) to the N(epsilon) atom of ornithine (ORN) to produce L-citrulline, which is a substrate for argininosuccinate synthetase, the enzyme involved in the final step in arginine biosynthesis. The sequence is that of Ornithine carbamoyltransferase subunit I from Escherichia coli (strain K12).